The sequence spans 296 residues: Probable AP endonuclease (296 aa).

Cysteines 16 and 20 form a disulfide. Zn(2+) contacts are provided by His78, His115, Glu142, His182, His218, Asp231, His233, and Glu271.

It belongs to the AP endonuclease 2 family. Zn(2+) serves as cofactor.

The protein localises to the host nucleus. It localises to the host cytoplasm. It is found in the virion. Its function is as follows. Endonuclease that plays a role in DNA repair. Cleaves phosphodiester bonds on the 5' side of apurinic or apyrimidinic sites (AP sites). In addition to endonuclease activity, the ASFV enzyme has a proofreading 3'-5' exonuclease activity that is considerably more efficient in the elimination of a mismatch than in that of a correctly paired base. Displays 3'-phosphatase and 3'-repair diesterase activities. The single nucleotide gaps generated by the AP endonuclease are filled by the viral AP endonuclease and DNA ligase. The protein is Probable AP endonuclease of Ornithodoros (relapsing fever ticks).